A 210-amino-acid chain; its full sequence is Large ribosomal subunit protein uL4 (210 aa).

Belongs to the universal ribosomal protein uL4 family. In terms of assembly, part of the 50S ribosomal subunit.

One of the primary rRNA binding proteins, this protein initially binds near the 5'-end of the 23S rRNA. It is important during the early stages of 50S assembly. It makes multiple contacts with different domains of the 23S rRNA in the assembled 50S subunit and ribosome. Functionally, forms part of the polypeptide exit tunnel. This chain is Large ribosomal subunit protein uL4, found in Orientia tsutsugamushi (strain Boryong) (Rickettsia tsutsugamushi).